A 517-amino-acid chain; its full sequence is Carotenoid phi-ring synthase (517 aa).

Residues 1–24 (MFARDSGRGHRHGRDRQAAVVPAP) form a disordered region. FAD contacts are provided by residues Ala45, 64-65 (ER), Arg72, Tyr99, Asp461, and Met472.

Belongs to the carotenoid/retinoid oxidoreductase family. The cofactor is FAD.

The enzyme catalyses a carotenoid beta-end derivative + 2 A = a carotenoid phi-end derivative + 2 AH2. Its pathway is carotenoid biosynthesis. Functionally, involved in the biosynthesis of isorenieratene, a carotenoid with aromatic end groups. Catalyzes the introduction of two additional double bonds into each ionone ring of beta-carotene to produce isorenieratene. The reaction includes an intramolecular methyl transfer from position C1 to position C2 of the ring. The sequence is that of Carotenoid phi-ring synthase from Streptomyces griseus.